We begin with the raw amino-acid sequence, 334 residues long: Thiamine-binding periplasmic protein (334 aa).

Positions 1–23 (MRLLSLLTFSLFAVIGLAPAAQA) are cleaved as a signal peptide. Thiamine is bound by residues 64–65 (DG), 166–167 (AT), tryptophan 202, and 220–223 (YTTS).

The protein belongs to the bacterial solute-binding protein 1 family. As to quaternary structure, the complex is composed of two ATP-binding proteins (ThiQ), two transmembrane proteins (ThiP) and a solute-binding protein (ThiB).

It is found in the periplasm. Part of the ABC transporter complex ThiBPQ involved in thiamine import. This is Thiamine-binding periplasmic protein (thiB) from Brucella abortus biovar 1 (strain 9-941).